A 278-amino-acid polypeptide reads, in one-letter code: Envelope glycoprotein L (278 aa).

A signal peptide spans 1 to 30 (MCRRPDCGFSFSPGPVILLWCCLLLPIVSS). In terms of domain architecture, gL betaherpesvirus-type spans 43-256 (VPAECPELTR…DKYYAGLPPE (214 aa)). Cys154 and Cys159 are joined by a disulfide.

The protein belongs to the herpesviridae glycoprotein L (gL) family. Betaherpesvirinae gL subfamily. Interacts with glycoprotein H (gH); this interaction is necessary for the correct processing and cell surface expression of gH. Forms the envelope pentamer complex (PC) composed of gH, gL, UL128, UL130, and UL131A. The pentamer interacts with host NRP2. Forms the envelope trimer complex composed of gH, gL, and gO. The trimer interacts with host PDGFRA. The trimer also interacts with host EPHA2.

Its subcellular location is the virion membrane. It localises to the host cell membrane. It is found in the host Golgi apparatus. The protein localises to the host trans-Golgi network. In terms of biological role, the heterodimer glycoprotein H-glycoprotein L is required for the fusion of viral and plasma membranes leading to virus entry into the host cell. Acts as a functional inhibitor of gH and maintains gH in an inhibited form. Upon binding to host integrins, gL dissociates from gH leading to activation of the viral fusion glycoproteins gB and gH. In human cytomegalovirus, forms two distincts complexes to mediate viral entry, a trimer and a pentamer at the surface of the virion envelope. The gH-gL-gO trimer is required for infection in fibroblasts by interacting with host PDGFRA, and in glioblastoma cells by interacting with host EPHA2. The gH-gL-UL128-UL130-UL131A pentamer is essential for viral entry in epithelial, endothelial and myeloid cells via interaction with host NRP2. This Homo sapiens (Human) protein is Envelope glycoprotein L.